The chain runs to 436 residues: Enolase (436 aa).

Residue glutamine 167 participates in (2R)-2-phosphoglycerate binding. The active-site Proton donor is the glutamate 209. Positions 246, 291, and 318 each coordinate Mg(2+). (2R)-2-phosphoglycerate contacts are provided by lysine 343, arginine 372, serine 373, and lysine 394. The active-site Proton acceptor is the lysine 343.

The protein belongs to the enolase family. In terms of assembly, component of the RNA degradosome, a multiprotein complex involved in RNA processing and mRNA degradation. It depends on Mg(2+) as a cofactor.

Its subcellular location is the cytoplasm. It is found in the secreted. It localises to the cell surface. It carries out the reaction (2R)-2-phosphoglycerate = phosphoenolpyruvate + H2O. It functions in the pathway carbohydrate degradation; glycolysis; pyruvate from D-glyceraldehyde 3-phosphate: step 4/5. Catalyzes the reversible conversion of 2-phosphoglycerate (2-PG) into phosphoenolpyruvate (PEP). It is essential for the degradation of carbohydrates via glycolysis. This chain is Enolase, found in Glaesserella parasuis serovar 5 (strain SH0165) (Haemophilus parasuis).